The sequence spans 361 residues: S-adenosylmethionine-dependent nucleotide dehydratase RSAD2 (361 aa).

Residues 69-289 (PTTPTSVNYH…LERHKEVSCL (221 aa)) form the Radical SAM core domain. Cys-83, Cys-87, and Cys-90 together coordinate [4Fe-4S] cluster. Lys-197 carries the N6-acetyllysine modification. Lys-206 is covalently cross-linked (Glycyl lysine isopeptide (Lys-Gly) (interchain with G-Cter in ubiquitin)).

Belongs to the radical SAM superfamily. RSAD2 family. Homodimer. Interacts with IRAK1 and TRAF6. Interacts with FPPS. Interacts with HADHB. Interacts (via C-terminus) with VAPA/VAP33 (via C-terminus). In terms of assembly, (Microbial infection) Interacts with human cytomegalovirus/HHV-5 protein vMIA/UL37; this interaction results in RSAD2/viperin relocalization from the endoplasmic reticulum to the mitochondria. As to quaternary structure, (Microbial infection) Interacts (via N-terminus) with enterovirus A71 protein 2C; this interaction inhibits viral replication. (Microbial infection) Interacts with herpes simplex virus 1/HHV-1 glycoprotein D; this interaction inhibits HHV-1 replication by facilitating IRF7-mediated IFN-beta production. Requires [4Fe-4S] cluster as cofactor. Acetylated by HAT1. HAT1-mediated acetylation of Lys-197 in turn recruits UBE4A that stimulates RSAD2 polyubiquitination leading to proteasomal degradation. Post-translationally, 'Lys-6'-linked polyubiquitination at Lys-206 leads to RSAD2 protein degradation.

The protein localises to the endoplasmic reticulum membrane. Its subcellular location is the golgi apparatus. It is found in the endoplasmic reticulum. It localises to the lipid droplet. The protein resides in the mitochondrion. The protein localises to the mitochondrion inner membrane. Its subcellular location is the mitochondrion outer membrane. It catalyses the reaction CTP + AH2 + S-adenosyl-L-methionine = 3'-deoxy-3',4'-didehydro-CTP + 5'-deoxyadenosine + L-methionine + A + H2O + H(+). With respect to regulation, IRAK1 and TRAF6 synergistically activate RSAD2 increasing its activity with CTP as substrate about 10-fold. Interferon-inducible antiviral protein which plays a major role in the cell antiviral state induced by type I and type II interferon. Catalyzes the conversion of cytidine triphosphate (CTP) to 3'-deoxy-3',4'-didehydro-CTP (ddhCTP) via a SAM-dependent radical mechanism. In turn, ddhCTP acts as a chain terminator for the RNA-dependent RNA polymerases from multiple viruses and directly inhibits viral replication. Therefore, inhibits a wide range of DNA and RNA viruses, including human cytomegalovirus (HCMV), hepatitis C virus (HCV), west Nile virus (WNV), dengue virus, sindbis virus, influenza A virus, sendai virus, vesicular stomatitis virus (VSV), zika virus, and human immunodeficiency virus (HIV-1). Also promotes TLR7 and TLR9-dependent production of IFN-beta production in plasmacytoid dendritic cells (pDCs) by facilitating 'Lys-63'-linked ubiquitination of IRAK1 by TRAF6. Plays a role in CD4+ T-cells activation and differentiation. Facilitates T-cell receptor (TCR)-mediated GATA3 activation and optimal T-helper 2 (Th2) cytokine production by modulating NFKB1 and JUNB activities. Can inhibit secretion of soluble proteins. This is S-adenosylmethionine-dependent nucleotide dehydratase RSAD2 from Homo sapiens (Human).